We begin with the raw amino-acid sequence, 1265 residues long: Stromal processing peptidase, chloroplastic (1265 aa).

A chloroplast-targeting transit peptide spans 1–143; that stretch reads MASSSSSIFT…SLRKHSQIVN (143 aa). Residue His-240 participates in Zn(2+) binding. The active-site Proton acceptor is Glu-243. Position 244 (His-244) interacts with Zn(2+). The active site involves Glu-314. A Zn(2+)-binding site is contributed by Glu-321.

The protein belongs to the peptidase M16 family. The cofactor is Zn(2+).

Its subcellular location is the plastid. It localises to the chloroplast stroma. Cleaves presequences (transit peptides) from chloroplastic protein precursors. Initially recognizes a precursor by binding to the C-terminus of its transit peptide and then removes the transit peptide in a single endoproteolytic step. In a next step, pursues the cleavage of transit peptide to a subfragment form. This chain is Stromal processing peptidase, chloroplastic, found in Arabidopsis thaliana (Mouse-ear cress).